Here is a 284-residue protein sequence, read N- to C-terminus: Trimeric intracellular cation channel type B (284 aa).

Residues 1–15 (MESFSELSLQFSQLS) are Lumenal-facing. A helical transmembrane segment spans residues 16-32 (MFPFFETAHYLTSVMSA). At 33 to 44 (REQAGAVDVASR) the chain is on the cytoplasmic side. The helical transmembrane segment at 45-68 (SPLASWFSSMLYCFGGGILSSILL) threads the bilayer. Topologically, residues 69–79 (AEPPVGILSNT) are lumenal. The helical transmembrane segment at 80-99 (TSIILASAVWYMVYYFPYDL) threads the bilayer. At 100–102 (FYN) the chain is on the cytoplasmic side. A helical membrane pass occupies residues 103–121 (CFFFLPIRLILAGMKEVTR). Lys-117 and Arg-121 together coordinate a 1,2-diacyl-sn-glycero-3-phospho-(1D-myo-inositol-4,5-bisphosphate). Topologically, residues 122 to 139 (TWKILSGVAHAHSHYKDA) are lumenal. The chain crosses the membrane as a helical span at residues 140-157 (MLVMITIGWARGAGGGLI). Residues 158-178 (SNFEQLVRGVWKPESNEFLKM) lie on the Cytoplasmic side of the membrane. Residues 179–196 (SYPVKVTLIGAVLFTLQH) traverse the membrane as a helical segment. Residues 197 to 204 (GQYLPISR) lie on the Lumenal side of the membrane. A helical membrane pass occupies residues 205-225 (HNLMFIYTLFLILIKVTMMLT). The Cytoplasmic portion of the chain corresponds to 226–284 (RSTASPFLPLETSLQHILFSRQQIPAEVRESPSSSGDKGKPSKKTLDKDSGEQDNKKDN). Residues 250–284 (PAEVRESPSSSGDKGKPSKKTLDKDSGEQDNKKDN) are disordered. The segment covering 262-284 (DKGKPSKKTLDKDSGEQDNKKDN) has biased composition (basic and acidic residues).

This sequence belongs to the TMEM38 family. In terms of assembly, homotrimer; conformation seems to be controled by binding to diacylglycerol (DAG).

It is found in the endoplasmic reticulum membrane. It catalyses the reaction K(+)(in) = K(+)(out). Its activity is regulated as follows. Channel activity is activated by increased cytosolic Ca(2+) levels and blocked by luminal high Ca(2+) levels. Its function is as follows. Intracellular monovalent cation channel required for maintenance of rapid intracellular calcium release. Acts as a potassium counter-ion channel that functions in synchronization with calcium release from intracellular stores. Activated by increased cytosolic Ca(2+) levels. The chain is Trimeric intracellular cation channel type B (tmem38b) from Xenopus tropicalis (Western clawed frog).